Consider the following 194-residue polypeptide: Peptidyl-tRNA hydrolase (194 aa).

Position 17 (tyrosine 17) interacts with tRNA. Histidine 22 serves as the catalytic Proton acceptor. Residues tyrosine 68, asparagine 70, and asparagine 116 each coordinate tRNA.

Belongs to the PTH family. As to quaternary structure, monomer.

Its subcellular location is the cytoplasm. It catalyses the reaction an N-acyl-L-alpha-aminoacyl-tRNA + H2O = an N-acyl-L-amino acid + a tRNA + H(+). Hydrolyzes ribosome-free peptidyl-tRNAs (with 1 or more amino acids incorporated), which drop off the ribosome during protein synthesis, or as a result of ribosome stalling. In terms of biological role, catalyzes the release of premature peptidyl moieties from peptidyl-tRNA molecules trapped in stalled 50S ribosomal subunits, and thus maintains levels of free tRNAs and 50S ribosomes. This chain is Peptidyl-tRNA hydrolase, found in Pseudomonas paraeruginosa (strain DSM 24068 / PA7) (Pseudomonas aeruginosa (strain PA7)).